A 609-amino-acid polypeptide reads, in one-letter code: Mitogen-activated protein kinase kinase kinase 3 (609 aa).

The interval 1-202 (MPTWWGRKSC…SAVHGSRIGG (202 aa)) is disordered. Over residues 11-28 (KNKDDNHRGIISTDRDIK) the composition is skewed to basic and acidic residues. 2 stretches are compositionally biased toward low complexity: residues 40-64 (PTRG…GFDS) and 90-108 (VSGS…SSGS). Positions 214–470 (WKKGKFLGSG…ASQLLEHPFL (257 aa)) constitute a Protein kinase domain. Residues 220 to 228 (LGSGTFGQV) and K243 contribute to the ATP site. D339 (proton acceptor) is an active-site residue. Disordered regions lie at residues 487 to 511 (PRSY…SHDN) and 590 to 609 (MEPS…SRLV). The span at 594-609 (SFRTQTPNSPLRSRLV) shows a compositional bias: polar residues.

It belongs to the protein kinase superfamily. STE Ser/Thr protein kinase family. MAP kinase kinase kinase subfamily. In terms of assembly, interacts with PBL27. In terms of tissue distribution, expressed in flower buds, roots, leaves, seedlings, stems and immature siliques. Absent of mature pollen.

It carries out the reaction L-seryl-[protein] + ATP = O-phospho-L-seryl-[protein] + ADP + H(+). The catalysed reaction is L-threonyl-[protein] + ATP = O-phospho-L-threonyl-[protein] + ADP + H(+). The sequence is that of Mitogen-activated protein kinase kinase kinase 3 from Arabidopsis thaliana (Mouse-ear cress).